A 376-amino-acid polypeptide reads, in one-letter code: Chaperone protein DnaJ (376 aa).

Positions 4–68 constitute a J domain; sequence DYYEILGVAR…ETRARYDRFG (65 aa). The segment at 102-121 is disordered; sequence GGMGGPTQQRRRGGPARGDD. The CR-type zinc finger occupies 136–218; the sequence is GGEKEIRISH…CDGKGTNQVT (83 aa). Residues C149, C152, C166, C169, C192, C195, C206, and C209 each coordinate Zn(2+). 4 CXXCXGXG motif repeats span residues 149–156, 166–173, 192–199, and 206–213; these read CETCSGSG, CSTCSGSG, CPTCNGTG, and CDACDGKG.

It belongs to the DnaJ family. Homodimer. Zn(2+) is required as a cofactor.

The protein resides in the cytoplasm. Its function is as follows. Participates actively in the response to hyperosmotic and heat shock by preventing the aggregation of stress-denatured proteins and by disaggregating proteins, also in an autonomous, DnaK-independent fashion. Unfolded proteins bind initially to DnaJ; upon interaction with the DnaJ-bound protein, DnaK hydrolyzes its bound ATP, resulting in the formation of a stable complex. GrpE releases ADP from DnaK; ATP binding to DnaK triggers the release of the substrate protein, thus completing the reaction cycle. Several rounds of ATP-dependent interactions between DnaJ, DnaK and GrpE are required for fully efficient folding. Also involved, together with DnaK and GrpE, in the DNA replication of plasmids through activation of initiation proteins. The chain is Chaperone protein DnaJ from Trichormus variabilis (strain ATCC 29413 / PCC 7937) (Anabaena variabilis).